The following is a 152-amino-acid chain: UPF0225 protein YchJ (152 aa).

Belongs to the UPF0225 family.

The chain is UPF0225 protein YchJ from Escherichia coli O81 (strain ED1a).